Here is a 405-residue protein sequence, read N- to C-terminus: MDHLPMPKFGPLAGLRVVFSGIEIAGPFAGQMFAEWGAEVIWIENVAWADTIRVQPNYPQLSRRNLHALSLNIFKDEGREAFLKLMETTDIFIEASKGPAFARRGITDEVLWQHNPKLVIAHLSGFGQYGTEEYTNLPAYNTIAQAFSGYLIQNGDVDQPMPAFPYTADYFSGLTATTAALAALHKVRETGKGESIDIAMYEVMLRMGQYFMMDYFNGGEMCPRMSKGKDPYYAGCGLYKCADGYIVMELVGITQIEECFKDIGLAHLLGTPEIPEGTQLIHRIECPYGPLVEEKLDAWLAAHTIAEVKERFAELNIACAKVLTVPELESNPQYVARESITQWQTMDGRTCKGPNIMPKFKNNPGQIWRGMPSHGMDTAAILKNIGYSENDIQELVSKGLAKVED.

CoA contacts are provided by Lys97 and Arg104. Catalysis depends on Asp169, which acts as the Nucleophile.

The protein belongs to the CoA-transferase III family. CaiB subfamily. Homodimer.

The protein resides in the cytoplasm. It carries out the reaction crotonobetainyl-CoA + (R)-carnitine = crotonobetaine + (R)-carnitinyl-CoA. It catalyses the reaction 4-(trimethylamino)butanoyl-CoA + (R)-carnitine = (R)-carnitinyl-CoA + 4-(trimethylamino)butanoate. It functions in the pathway amine and polyamine metabolism; carnitine metabolism. Catalyzes the reversible transfer of the CoA moiety from gamma-butyrobetainyl-CoA to L-carnitine to generate L-carnitinyl-CoA and gamma-butyrobetaine. Is also able to catalyze the reversible transfer of the CoA moiety from gamma-butyrobetainyl-CoA or L-carnitinyl-CoA to crotonobetaine to generate crotonobetainyl-CoA. This Escherichia coli (strain 55989 / EAEC) protein is L-carnitine CoA-transferase.